A 482-amino-acid chain; its full sequence is MKIRTRYAPSPTGYLHIGGARTALFNYLLAKAYGGDFIIRIEDTDIERNVEGGINSQLDFLAWMGIIPDESIRNPKAFGPYIQSEKLKHYEKLALDLVDQKKAYFCFCSKEQLDADRELAEKSHQTPKYKRHCLNLDKKTIESNLLQNKEYTIRLKINENMEYSWDDLIRGKISIPGSALTDPVILKSNKIAMYNFAVVIDDYEMQISHVIRGEEHISNTPYQLAIAQALNYDITKIKYGHLSIIVDETGKKLSKRNLSLKQFVSDYEKDGYWPHAITNFVALLGWSPKNNDEIMSLETMIKNFDINNLSKSPAFFDINKMNWFSTQYFNNITQEEFINFIKKHSLTKELVLNDYTFINKCLLFKSHIINLKQLIDLVIEQFNCDKKVLASDVDYIKKNQLITVVRVFYEQLIINDEFNEEFIKEIIKKVQIITNNKGANLYMPIRIATTFSSHGPELAKTICYLGREKVLKNLINILKILD.

The short motif at 9–19 (PSPTGYLHIGG) is the 'HIGH' region element. The 'KMSKS' region motif lies at 252–256 (KLSKR). Position 255 (Lys255) interacts with ATP.

The protein belongs to the class-I aminoacyl-tRNA synthetase family. Glutamate--tRNA ligase type 1 subfamily. As to quaternary structure, monomer.

The protein localises to the cytoplasm. It carries out the reaction tRNA(Glu) + L-glutamate + ATP = L-glutamyl-tRNA(Glu) + AMP + diphosphate. Catalyzes the attachment of glutamate to tRNA(Glu) in a two-step reaction: glutamate is first activated by ATP to form Glu-AMP and then transferred to the acceptor end of tRNA(Glu). This is Glutamate--tRNA ligase from Ureaplasma parvum serovar 3 (strain ATCC 27815 / 27 / NCTC 11736).